The chain runs to 250 residues: Probable transcriptional regulatory protein Cvib_1432 (250 aa).

The protein belongs to the TACO1 family.

The protein resides in the cytoplasm. The sequence is that of Probable transcriptional regulatory protein Cvib_1432 from Chlorobium phaeovibrioides (strain DSM 265 / 1930) (Prosthecochloris vibrioformis (strain DSM 265)).